The following is a 637-amino-acid chain: Protein arginine N-methyltransferase 5 (637 aa).

A2 carries the post-translational modification N-acetylalanine. The tract at residues 13-292 (RVSSGRDLNC…YLEYLSQNRP (280 aa)) is TIM barrel. The SAM-dependent MTase PRMT-type domain maps to 308 to 615 (LQSPLQPLMD…SNSKKVWYEW (308 aa)). Y324 provides a ligand contact to S-adenosyl-L-methionine. Residue F327 coordinates a protein. S-adenosyl-L-methionine is bound by residues 333–334 (KY), E392, and 419–420 (DM). E435 and E444 together coordinate a protein. Catalysis depends on proton donor/acceptor residues E435 and E444. The interval 465-637 (PGEYTSFLAP…PTGRSYTIGL (173 aa)) is beta barrel. Residues 488-494 (REKDRDP) are dimerization.

This sequence belongs to the class I-like SAM-binding methyltransferase superfamily. Protein arginine N-methyltransferase family. Forms, at least, homodimers and homotetramers. Component of the methylosome complex, composed of PRMT5, WDR77 and CLNS1A. Found in a complex composed of PRMT5, WDR77 and RIOK1. RIOK1 and CLNS1A associate with PRMT5 in a mutually exclusive fashion, which allows the recruitment of distinct methylation substrates, such as nucleolin/NCL and Sm proteins, respectively. Interacts with PRDM1. Identified in a complex composed of methylosome and PRMT1 and ERH. Interacts with EGFR; methylates EGFR and stimulates EGFR-mediated ERK activation. Interacts with HOXA9. Interacts with SRGAP2. Found in a complex with COPRS, RUNX1 and CBFB. Interacts with CHTOP; the interaction symmetrically methylates CHTOP, but seems to require the presence of PRMT1. Interacts with EPB41L3; this modulates methylation of target proteins. Component of a high molecular weight E2F-pocket protein complex, CERC (cyclin E1 repressor complex). Associates with SWI/SNF remodeling complexes containing SMARCA2 and SMARCA4. Interacts with JAK2, SSTR1, SUPT5H, BRAF and with active RAF1. Interacts with LSM11, PRMT7 and SNRPD3. Interacts with COPRS; promoting its recruitment on histone H4. Interacts with CLNS1A/pICln. Identified in a complex with CLNS1A/pICln and Sm proteins. Interacts with RPS10. Interacts with WDR77. Interacts with IWS1. Interacts with CRY1. Interacts with POLR2A. Interacts with SMN1/SMN2. Interacts with LYAR; this interaction is direct. Interacts with TTC5/STRAP; this interaction is DNA damage-dependent and promotes PRMT5 interaction with p53/TP53. Interacts with p53/TP53 in response to DNA damage; the interaction is TTC5/STRAP dependent. Interacts with FAM47E; the interaction is direct, promotes PRMT5 localization to chromatin, and does not disrupt its association with WDR77 or STUB1. Interacts with TDRD6. Interacts with STUB1. Interacts with MBD2. Does not interact with MBD3.

It localises to the cytoplasm. The protein resides in the nucleus. The protein localises to the golgi apparatus. The catalysed reaction is L-arginyl-[protein] + 2 S-adenosyl-L-methionine = N(omega),N(omega)'-dimethyl-L-arginyl-[protein] + 2 S-adenosyl-L-homocysteine + 2 H(+). Its activity is regulated as follows. Activity is increased by EGF, HGF, FGF1 or FGF2 treatments, and slightly decreased by NGF treatment. In terms of biological role, arginine methyltransferase that can both catalyze the formation of omega-N monomethylarginine (MMA) and symmetrical dimethylarginine (sDMA), with a preference for the formation of MMA. Specifically mediates the symmetrical dimethylation of arginine residues in the small nuclear ribonucleoproteins Sm D1 (SNRPD1) and Sm D3 (SNRPD3); such methylation being required for the assembly and biogenesis of snRNP core particles. Methylates SUPT5H and may regulate its transcriptional elongation properties. May methylate the N-terminal region of MBD2. Mono- and dimethylates arginine residues of myelin basic protein (MBP) in vitro. May play a role in cytokine-activated transduction pathways. Negatively regulates cyclin E1 promoter activity and cellular proliferation. Methylates histone H2A and H4 'Arg-3' during germ cell development. Methylates histone H3 'Arg-8', which may repress transcription. Methylates the Piwi proteins (PIWIL1, PIWIL2 and PIWIL4), methylation of Piwi proteins being required for the interaction with Tudor domain-containing proteins and subsequent localization to the meiotic nuage. Methylates RPS10. Attenuates EGF signaling through the MAPK1/MAPK3 pathway acting at 2 levels. First, monomethylates EGFR; this enhances EGFR 'Tyr-1197' phosphorylation and PTPN6 recruitment, eventually leading to reduced SOS1 phosphorylation. Second, methylates RAF1 and probably BRAF, hence destabilizing these 2 signaling proteins and reducing their catalytic activity. Required for induction of E-selectin and VCAM-1, on the endothelial cells surface at sites of inflammation. Methylates HOXA9. Methylates and regulates SRGAP2 which is involved in cell migration and differentiation. Acts as a transcriptional corepressor in CRY1-mediated repression of the core circadian component PER1 by regulating the H4R3 dimethylation at the PER1 promoter. Methylates GM130/GOLGA2, regulating Golgi ribbon formation. Methylates H4R3 in genes involved in glioblastomagenesis in a CHTOP- and/or TET1-dependent manner. Symmetrically methylates POLR2A, a modification that allows the recruitment to POLR2A of proteins including SMN1/SMN2 and SETX. This is required for resolving RNA-DNA hybrids created by RNA polymerase II, that form R-loop in transcription terminal regions, an important step in proper transcription termination. Along with LYAR, binds the promoter of gamma-globin HBG1/HBG2 and represses its expression. Symmetrically methylates NCL. Methylates p53/TP53; methylation might possibly affect p53/TP53 target gene specificity. Involved in spliceosome maturation and mRNA splicing in prophase I spermatocytes through the catalysis of the symmetrical arginine dimethylation of SNRPB (small nuclear ribonucleoprotein-associated protein) and the interaction with tudor domain-containing protein TDRD6. The polypeptide is Protein arginine N-methyltransferase 5 (PRMT5) (Bos taurus (Bovine)).